The chain runs to 144 residues: Monooxygenase ptaG (144 aa).

It belongs to the avfA family.

It functions in the pathway secondary metabolite biosynthesis. Functionally, monooxygenase; part of the gene cluster that mediates the biosynthesis of pestheic acid, a diphenyl ether which is a biosynthetic precursor of the unique chloropupukeananes. The biosynthesis initiates from condensation of acetate and malonate units catalyzed by the non-reducing PKS ptaA. As the ptaA protein is TE/CLC domain-deficient, hydrolysis and Claisen cyclization of the polyketide could be catalyzed by ptaB containing a beta-lactamase domain. The ptaB protein might hydrolyze the thioester bond between the ACP of ptaA and the intermediate to release atrochrysone carboxylic acid, which is spontaneously dehydrated to form endocrocin anthrone. Endocrocin anthrone is then converted to endocrocin, catalyzed by the anthrone oxygenase ptaC. Spontaneous decarboxylation of endocrocin occurs to generate emodin. An O-methyltransferase (ptaH or ptaI) could methylate emodin to form physcion. PtaJ could then catalyze the oxidative cleavage of physcion, and rotation of the intermediate could then afford desmethylisosulochrin. PtaF, a putative NADH-dependent oxidoreductase, might also participate in the oxidative cleavage step. Desmethylisosulochrin is then transformed by another O-methyltransferase (ptaH or ptaI) to form isosulochrin. Chlorination of isosulochrin by ptaM in the cyclohexadienone B ring then produces chloroisosulochrin. PtaE is responsible for the oxidative coupling reactions of both benzophenones isosulochrin and chloroisosulochrin to RES-1214-1 and pestheic acid respectively, regardless of chlorination. This Pestalotiopsis fici (strain W106-1 / CGMCC3.15140) protein is Monooxygenase ptaG.